We begin with the raw amino-acid sequence, 172 residues long: Small ribosomal subunit protein uS5 (172 aa).

Positions 16-79 (LKDRLVAINR…ESAKKNLVKV (64 aa)) constitute an S5 DRBM domain.

Belongs to the universal ribosomal protein uS5 family. Part of the 30S ribosomal subunit. Contacts proteins S4 and S8.

With S4 and S12 plays an important role in translational accuracy. Functionally, located at the back of the 30S subunit body where it stabilizes the conformation of the head with respect to the body. In Bacteroides thetaiotaomicron (strain ATCC 29148 / DSM 2079 / JCM 5827 / CCUG 10774 / NCTC 10582 / VPI-5482 / E50), this protein is Small ribosomal subunit protein uS5.